The primary structure comprises 111 residues: Putative pterin-4-alpha-carbinolamine dehydratase (111 aa).

Belongs to the pterin-4-alpha-carbinolamine dehydratase family.

The catalysed reaction is (4aS,6R)-4a-hydroxy-L-erythro-5,6,7,8-tetrahydrobiopterin = (6R)-L-erythro-6,7-dihydrobiopterin + H2O. The polypeptide is Putative pterin-4-alpha-carbinolamine dehydratase (Alkaliphilus metalliredigens (strain QYMF)).